We begin with the raw amino-acid sequence, 213 residues long: Transmembrane emp24 domain-containing protein p24delta8 (213 aa).

An N-terminal signal peptide occupies residues 1-22 (MDLCRSSILLLIIALLSPRTLS). The Lumenal segment spans residues 23–180 (MRYELKSSKT…QELNRSTNSK (158 aa)). In terms of domain architecture, GOLD spans 32 to 148 (TKCIGEEIHE…VDMMEYQVKT (117 aa)). N97 carries N-linked (GlcNAc...) asparagine glycosylation. The stretch at 163–176 (LREREEEMQELNRS) forms a coiled coil. The residue at position 166 (R166) is an Omega-N-methylated arginine. N174 carries an N-linked (GlcNAc...) asparagine glycan. The chain crosses the membrane as a helical span at residues 181 to 203 (MAWLSFGSLVVCLSVAGLQFWHL). The interval 202 to 213 (HLKTFFEKKKLI) is interaction with ARF1. Over 204 to 213 (KTFFEKKKLI) the chain is Cytoplasmic. The COPII vesicle coat-binding signature appears at 206-207 (FF). A COPI vesicle coat-binding motif is present at residues 206 to 213 (FFEKKKLI).

The protein belongs to the EMP24/GP25L family. As to quaternary structure, probably oligomerizes with other members of the EMP24/GP25L family. Associates with the COPI vesicle coat (coatomer). Associates with the COPII vesicle coat (coatomer). Interacts with ARF1 (GDP-bound).

The protein localises to the endoplasmic reticulum membrane. Its subcellular location is the golgi apparatus. The protein resides in the cis-Golgi network membrane. It is found in the golgi stack membrane. Its function is as follows. Involved in vesicular protein trafficking. Mainly functions in the early secretory pathway. Thought to act as cargo receptor at the lumenal side for incorporation of secretory cargo molecules into transport vesicles and to be involved in vesicle coat formation at the cytoplasmic side. On Golgi membranes, acts as a primary receptor for ARF1-GDP which is involved in COPI-vesicle formation. In Arabidopsis thaliana (Mouse-ear cress), this protein is Transmembrane emp24 domain-containing protein p24delta8.